A 648-amino-acid chain; its full sequence is Pesticidal crystal protein Cry19Aa (648 aa).

This sequence belongs to the delta endotoxin family.

Promotes colloidosmotic lysis by binding to the midgut epithelial cells of mosquitos. The protein is Pesticidal crystal protein Cry19Aa (cry19Aa) of Bacillus thuringiensis subsp. jegathesan.